The following is a 301-amino-acid chain: Nitric oxide synthase-interacting protein (301 aa).

Residue Ser36 is modified to Phosphoserine. Residues 55–75 are U-box-like; that stretch reads DPVVTPDGYLYEREAILEYIL. The Nuclear localization signal motif lies at 78 to 101; the sequence is KREIARQVKAYEKQRGARREEQKE. Residues 131–154 form a disordered region; that stretch reads PKAATLPNTEGEQPGPSVGPVGKD.

Belongs to the NOSIP family. As to quaternary structure, interacts with NOS1 and NOS3. Interacts with PP2A holoenzyme, containing PPP2CA, PPP2CB, PPP2R1A and PPP2R2A subunits.

It localises to the cytoplasm. Its subcellular location is the nucleus. It carries out the reaction S-ubiquitinyl-[E2 ubiquitin-conjugating enzyme]-L-cysteine + [acceptor protein]-L-lysine = [E2 ubiquitin-conjugating enzyme]-L-cysteine + N(6)-ubiquitinyl-[acceptor protein]-L-lysine.. Its pathway is protein modification; protein ubiquitination. In terms of biological role, E3 ubiquitin-protein ligase that is essential for proper development of the forebrain, the eye and the face. Catalyzes monoubiquitination of serine/threonine-protein phosphatase 2A (PP2A) catalytic subunit PPP2CA/PPP2CB. Negatively regulates nitric oxide production by inducing NOS1 and NOS3 translocation to actin cytoskeleton and inhibiting their enzymatic activity. The polypeptide is Nitric oxide synthase-interacting protein (Nosip) (Mus musculus (Mouse)).